We begin with the raw amino-acid sequence, 159 residues long: Probable inactive acireductone dioxygenase 2 (159 aa).

This sequence belongs to the acireductone dioxygenase (ARD) family.

Its subcellular location is the cytoplasm. It is found in the nucleus. Functionally, probable inactive acireductone dioxygenase. This is Probable inactive acireductone dioxygenase 2 from Caenorhabditis briggsae.